The primary structure comprises 168 residues: ATP synthase F(1) complex subunit delta, mitochondrial (168 aa).

A mitochondrion-targeting transit peptide spans 1 to 22 (MLPAALLRHPGLRRLVLQARTY). K136 and K165 each carry N6-acetyllysine; alternate. K136 and K165 each carry N6-succinyllysine; alternate.

It belongs to the ATPase epsilon chain family. As to quaternary structure, component of the ATP synthase complex composed at least of ATP5F1A/subunit alpha, ATP5F1B/subunit beta, ATP5MC1/subunit c (homooctomer), MT-ATP6/subunit a, MT-ATP8/subunit 8, ATP5ME/subunit e, ATP5MF/subunit f, ATP5MG/subunit g, ATP5MK/subunit k, ATP5MJ/subunit j, ATP5F1C/subunit gamma, ATP5F1D/subunit delta, ATP5F1E/subunit epsilon, ATP5PF/subunit F6, ATP5PB/subunit b, ATP5PD/subunit d, ATP5PO/subunit OSCP. ATP synthase complex consists of a soluble F(1) head domain (subunits alpha(3) and beta(3)) - the catalytic core - and a membrane F(0) domain - the membrane proton channel (subunits c, a, 8, e, f, g, k and j). These two domains are linked by a central stalk (subunits gamma, delta, and epsilon) rotating inside the F1 region and a stationary peripheral stalk (subunits F6, b, d, and OSCP). Component of a complex composed at least by ATPIF1, ATP5F1A, ATP5F1B, ATP5F1C AND ATP5F1E.

It is found in the mitochondrion. The protein resides in the mitochondrion inner membrane. Its function is as follows. Subunit delta, of the mitochondrial membrane ATP synthase complex (F(1)F(0) ATP synthase or Complex V) that produces ATP from ADP in the presence of a proton gradient across the membrane which is generated by electron transport complexes of the respiratory chain. ATP synthase complex consist of a soluble F(1) head domain - the catalytic core - and a membrane F(1) domain - the membrane proton channel. These two domains are linked by a central stalk rotating inside the F(1) region and a stationary peripheral stalk. During catalysis, ATP synthesis in the catalytic domain of F(1) is coupled via a rotary mechanism of the central stalk subunits to proton translocation. In vivo, can only synthesize ATP although its ATP hydrolase activity can be activated artificially in vitro. With the central stalk subunit gamma, is essential for the biogenesis of F(1) catalytic part of the ATP synthase complex namely in the formation of F1 assembly intermediate. The sequence is that of ATP synthase F(1) complex subunit delta, mitochondrial from Rattus norvegicus (Rat).